We begin with the raw amino-acid sequence, 470 residues long: Poly(A) polymerase catalytic subunit (470 aa).

Residues Asp-192 and Asp-194 contribute to the active site.

Belongs to the poxviridae poly(A) polymerase catalytic subunit family. In terms of assembly, heterodimer of a large (catalytic) subunit and a small (regulatory) subunit.

The catalysed reaction is RNA(n) + ATP = RNA(n)-3'-adenine ribonucleotide + diphosphate. Polymerase that creates the 3'-poly(A) tail of mRNA's. This chain is Poly(A) polymerase catalytic subunit (PAPL), found in Odocoileus hemionus (Mule deer).